The sequence spans 495 residues: Aspartyl/glutamyl-tRNA(Asn/Gln) amidotransferase subunit B (495 aa).

Belongs to the GatB/GatE family. GatB subfamily. In terms of assembly, heterotrimer of A, B and C subunits.

The catalysed reaction is L-glutamyl-tRNA(Gln) + L-glutamine + ATP + H2O = L-glutaminyl-tRNA(Gln) + L-glutamate + ADP + phosphate + H(+). It carries out the reaction L-aspartyl-tRNA(Asn) + L-glutamine + ATP + H2O = L-asparaginyl-tRNA(Asn) + L-glutamate + ADP + phosphate + 2 H(+). Allows the formation of correctly charged Asn-tRNA(Asn) or Gln-tRNA(Gln) through the transamidation of misacylated Asp-tRNA(Asn) or Glu-tRNA(Gln) in organisms which lack either or both of asparaginyl-tRNA or glutaminyl-tRNA synthetases. The reaction takes place in the presence of glutamine and ATP through an activated phospho-Asp-tRNA(Asn) or phospho-Glu-tRNA(Gln). This Rippkaea orientalis (strain PCC 8801 / RF-1) (Cyanothece sp. (strain PCC 8801)) protein is Aspartyl/glutamyl-tRNA(Asn/Gln) amidotransferase subunit B.